The primary structure comprises 248 residues: ATP synthase subunit a, chloroplastic (248 aa).

5 helical membrane-spanning segments follow: residues 38 to 58 (QVLI…AIAV), 96 to 116 (VPFI…GALL), 135 to 155 (INTT…AGLT), 200 to 220 (LVVV…VMFL), and 221 to 241 (GLFT…AYIG).

Belongs to the ATPase A chain family. In terms of assembly, F-type ATPases have 2 components, CF(1) - the catalytic core - and CF(0) - the membrane proton channel. CF(1) has five subunits: alpha(3), beta(3), gamma(1), delta(1), epsilon(1). CF(0) has four main subunits: a, b, b' and c.

It localises to the plastid. The protein localises to the chloroplast thylakoid membrane. Key component of the proton channel; it plays a direct role in the translocation of protons across the membrane. The chain is ATP synthase subunit a, chloroplastic from Nuphar advena (Common spatterdock).